A 151-amino-acid polypeptide reads, in one-letter code: Large ribosomal subunit protein bL9 (151 aa).

Belongs to the bacterial ribosomal protein bL9 family.

Its function is as follows. Binds to the 23S rRNA. The sequence is that of Large ribosomal subunit protein bL9 from Desulfosudis oleivorans (strain DSM 6200 / JCM 39069 / Hxd3) (Desulfococcus oleovorans).